The chain runs to 995 residues: Endo-beta-N-acetylglucosaminidase EndoS (995 aa).

Positions 1–36 are cleaved as a signal peptide; it reads MDKHLLVKRTLGCVCAATLMGAALATHHDSLNTVKA. Residues 112-432 form the GH18 domain; it reads SLYGGYFRTW…KDATDNIFHS (321 aa). The a glycoprotein site is built by His151, Trp153, and Arg186. The active-site Proton donor is the Glu235. 7 residues coordinate a glycoprotein: Asp237, Gln303, Tyr305, Glu349, Glu350, Asn356, and Tyr402. LRR repeat units lie at residues 437-460, 478-503, 562-585, and 586-609; these read SKAL…DFPD, LERF…KFKK, LTGL…DAAT, and LTSL…ENRQ. The tract at residues 765-923 is carbohydrate-binding module (CBM); sequence MVNLAEGATV…VPELQILGYP (159 aa). 5 residues coordinate Ca(2+): Lys786, Asp789, Gln791, Pro915, and Glu916. A three-helix bundle (3H) region spans residues 924 to 995; it reads LPNADTIMKT…CIEKRQLLKK (72 aa).

This sequence belongs to the glycosyl hydrolase 18 family. Post-translationally, cleaved by SpeB protease; leading to loss of endoglucosidase activity. EndoS is produced and secreted prior to SpeB, suggesting that it is degraded after acting as a host immune evasion factor.

The protein localises to the secreted. It is found in the host extracellular space. It catalyses the reaction an N(4)-(oligosaccharide-(1-&gt;3)-[oligosaccharide-(1-&gt;6)]-beta-D-Man-(1-&gt;4)-beta-D-GlcNAc-(1-&gt;4)-alpha-D-GlcNAc)-L-asparaginyl-[protein] + H2O = an oligosaccharide-(1-&gt;3)-[oligosaccharide-(1-&gt;6)]-beta-D-Man-(1-&gt;4)-D-GlcNAc + N(4)-(N-acetyl-beta-D-glucosaminyl)-L-asparaginyl-[protein]. In terms of biological role, endoglucosidase that acts as a host immune evasion factor by mediating hydrolysis of the N-linked glycan from the Fc region of host immunoglobulin-gamma (IgG) during infection. Specifically catalyzes the hydrolysis of the beta-1,4 linkage between the first two N-acetylglucosamine residues of the complex-type N-linked glycan located on 'Asn-297' of the Fc region of IgG antibodies (IGHG1, IGHG2, IGHG3 or IGHG4), thereby preventing interaction between IgGs and Fc receptors and ability to activate the complement pathway. Shows a specificity for biantennary complex type N-glycans; does neither cleave larger complex type glycans nor oligomannose and nor hybrid-type glycans. Specifically acts on IgGs; does not act on immunoglobulin alpha, beta, delta or mu. The protein is Endo-beta-N-acetylglucosaminidase EndoS of Streptococcus pyogenes serotype M1.